The following is a 311-amino-acid chain: Peptide methionine sulfoxide reductase MsrA/MsrB (311 aa).

Positions 1 to 155 (MAEIYLAGGC…PGGYCHINVN (155 aa)) are peptide methionine sulfoxide reductase A. Cysteine 10 is a catalytic residue. One can recognise a MsrB domain in the interval 172–295 (DAELKEQLTQ…NSAALRFIPK (124 aa)). Cysteine 284 (nucleophile) is an active-site residue.

It in the N-terminal section; belongs to the MsrA Met sulfoxide reductase family. This sequence in the C-terminal section; belongs to the MsrB Met sulfoxide reductase family.

The enzyme catalyses L-methionyl-[protein] + [thioredoxin]-disulfide + H2O = L-methionyl-(S)-S-oxide-[protein] + [thioredoxin]-dithiol. The catalysed reaction is [thioredoxin]-disulfide + L-methionine + H2O = L-methionine (S)-S-oxide + [thioredoxin]-dithiol. It catalyses the reaction L-methionyl-[protein] + [thioredoxin]-disulfide + H2O = L-methionyl-(R)-S-oxide-[protein] + [thioredoxin]-dithiol. In terms of biological role, has an important function as a repair enzyme for proteins that have been inactivated by oxidation. Catalyzes the reversible oxidation-reduction of methionine sulfoxide in proteins to methionine. Involved in protection against oxidative stress when the bacterium enters the host bloodstream and required for maximal growth under aerobic and anaerobic conditions. This is Peptide methionine sulfoxide reductase MsrA/MsrB (msrAB) from Streptococcus gordonii (strain Challis / ATCC 35105 / BCRC 15272 / CH1 / DL1 / V288).